We begin with the raw amino-acid sequence, 293 residues long: N-acetylmannosamine kinase (293 aa).

Residues 5 to 12 (AIDIGGTK) and 133 to 140 (GVGGGLVI) each bind ATP. Zn(2+) contacts are provided by H157, C167, C169, and C174.

This sequence belongs to the ROK (NagC/XylR) family. NanK subfamily. Homodimer.

The enzyme catalyses an N-acyl-D-mannosamine + ATP = an N-acyl-D-mannosamine 6-phosphate + ADP + H(+). It participates in amino-sugar metabolism; N-acetylneuraminate degradation; D-fructose 6-phosphate from N-acetylneuraminate: step 2/5. Functionally, catalyzes the phosphorylation of N-acetylmannosamine (ManNAc) to ManNAc-6-P. In Vibrio vulnificus (strain CMCP6), this protein is N-acetylmannosamine kinase.